Reading from the N-terminus, the 414-residue chain is Cytochrome P450 GfsF (414 aa).

Residues 1–32 are disordered; that stretch reads MTDTTLVEAGDPAEDAPEWPMKRDTGCPFDPP. 6 residues coordinate heme b: H75, H107, R111, R303, H361, and C363.

It belongs to the cytochrome P450 family. In terms of assembly, monomer. The cofactor is heme b.

Its pathway is antibiotic biosynthesis. Involved in the synthesis of the 16-membered macrolide antibiotics FD-891 and FD-892. Consecutively catalyzes epoxidation of C8-C9 and then hydroxylation at C10 to convert 25-O-methyl-FD-892 to FD-891. Consecutively catalyzes epoxidation of C8-C9 and then hydroxylation at C10 to convert 8,9-epoxy-FD-892 to 25-O-demethyl-FD-891 as well as converting 25-oxo-FD-892 to 8,9-epoxy-25-oxo-FD-892 and 8,9-epoxy-10-hydroxy-25-oxo-FD-892. In vitro is furnished with P.putida putidaredoxin and putidaredoxin reductase to provide the required two-electron reduction. This Streptomyces halstedii protein is Cytochrome P450 GfsF.